We begin with the raw amino-acid sequence, 351 residues long: UPF0421 protein BC_2748 (351 aa).

The next 4 membrane-spanning stretches (helical) occupy residues 19-39 (IAVFLTVLVCDFFNIPTIFAV), 74-94 (FTFFLGHQAISYALAAMFTIV), 109-129 (TLTAVAMIPITANHYFTAFLI), and 131-151 (LATTSTGIIVSTLVNFFIFPP).

It belongs to the UPF0421 family.

It localises to the cell membrane. The sequence is that of UPF0421 protein BC_2748 from Bacillus cereus (strain ATCC 14579 / DSM 31 / CCUG 7414 / JCM 2152 / NBRC 15305 / NCIMB 9373 / NCTC 2599 / NRRL B-3711).